A 419-amino-acid polypeptide reads, in one-letter code: Glucose-1-phosphate adenylyltransferase (419 aa).

Alpha-D-glucose 1-phosphate contacts are provided by residues Tyr106, Gly171, Glu186–Lys187, and Ser204.

Belongs to the bacterial/plant glucose-1-phosphate adenylyltransferase family. As to quaternary structure, homotetramer.

The enzyme catalyses alpha-D-glucose 1-phosphate + ATP + H(+) = ADP-alpha-D-glucose + diphosphate. It functions in the pathway glycan biosynthesis; glycogen biosynthesis. Functionally, involved in the biosynthesis of ADP-glucose, a building block required for the elongation reactions to produce glycogen. Catalyzes the reaction between ATP and alpha-D-glucose 1-phosphate (G1P) to produce pyrophosphate and ADP-Glc. This chain is Glucose-1-phosphate adenylyltransferase, found in Roseobacter denitrificans (strain ATCC 33942 / OCh 114) (Erythrobacter sp. (strain OCh 114)).